A 167-amino-acid polypeptide reads, in one-letter code: Small ribosomal subunit protein uS5 (167 aa).

In terms of domain architecture, S5 DRBM spans 12–75; the sequence is LQEKLVQVNR…EAARRNMIQV (64 aa).

The protein belongs to the universal ribosomal protein uS5 family. In terms of assembly, part of the 30S ribosomal subunit. Contacts proteins S4 and S8.

With S4 and S12 plays an important role in translational accuracy. Its function is as follows. Located at the back of the 30S subunit body where it stabilizes the conformation of the head with respect to the body. The chain is Small ribosomal subunit protein uS5 from Alcanivorax borkumensis (strain ATCC 700651 / DSM 11573 / NCIMB 13689 / SK2).